We begin with the raw amino-acid sequence, 188 residues long: Peptidyl-tRNA hydrolase (188 aa).

A tRNA-binding site is contributed by Phe14. The Proton acceptor role is filled by His19. Residues Tyr64, Asn66, and Asn112 each coordinate tRNA.

Belongs to the PTH family. As to quaternary structure, monomer.

It is found in the cytoplasm. The catalysed reaction is an N-acyl-L-alpha-aminoacyl-tRNA + H2O = an N-acyl-L-amino acid + a tRNA + H(+). Its function is as follows. Hydrolyzes ribosome-free peptidyl-tRNAs (with 1 or more amino acids incorporated), which drop off the ribosome during protein synthesis, or as a result of ribosome stalling. Catalyzes the release of premature peptidyl moieties from peptidyl-tRNA molecules trapped in stalled 50S ribosomal subunits, and thus maintains levels of free tRNAs and 50S ribosomes. The sequence is that of Peptidyl-tRNA hydrolase from Onion yellows phytoplasma (strain OY-M).